Here is a 278-residue protein sequence, read N- to C-terminus: Orotidine 5'-phosphate decarboxylase (278 aa).

Substrate-binding positions include Asp-40, 62-64 (KTH), 93-102 (DRKFIDIGNT), Tyr-229, and Arg-247. Catalysis depends on Lys-95, which acts as the Proton donor.

Belongs to the OMP decarboxylase family.

The enzyme catalyses orotidine 5'-phosphate + H(+) = UMP + CO2. The protein operates within pyrimidine metabolism; UMP biosynthesis via de novo pathway; UMP from orotate: step 2/2. The sequence is that of Orotidine 5'-phosphate decarboxylase (pyrG) from Aspergillus fumigatus (strain ATCC MYA-4609 / CBS 101355 / FGSC A1100 / Af293) (Neosartorya fumigata).